Consider the following 676-residue polypeptide: Polyunsaturated fatty acid lipoxygenase ALOX15B (676 aa).

The PLAT domain maps to 2-124; the sequence is AEFRVRVSTG…TLVLQEGTAK (123 aa). Ca(2+)-binding residues include Gly-15, Gly-17, Asp-39, Asn-40, Gly-42, Glu-44, Asp-85, and Ala-86. The 552-residue stretch at 125-676 folds into the Lipoxygenase domain; the sequence is VSWADHHPVL…PPLIENSVSI (552 aa). Residues His-373, His-378, His-553, and Ile-676 each coordinate Fe cation.

This sequence belongs to the lipoxygenase family. Requires Fe cation as cofactor. In terms of tissue distribution, expressed in hair, prostate, lung, ovary, lymph node, spinal cord and cornea.

It is found in the nucleus. The protein localises to the cytoplasm. Its subcellular location is the cytosol. The protein resides in the cell membrane. It localises to the cytoskeleton. It is found in the membrane. The protein localises to the cell junction. Its subcellular location is the adherens junction. The protein resides in the focal adhesion. It carries out the reaction (5Z,8Z,11Z,14Z)-eicosatetraenoate + O2 = (15S)-hydroperoxy-(5Z,8Z,11Z,13E)-eicosatetraenoate. The catalysed reaction is (9Z,12Z)-octadecadienoate + O2 = 13-hydroperoxy-(9Z,11E)-octadecadienoate. The enzyme catalyses (5S)-hydroxy-(6E,8Z,11Z,14Z)-eicosatetraenoate + O2 = (5S)-hydroxy-(15S)-hydroperoxy-(6E,8Z,11Z,13E)-eicosatetraenoate. It catalyses the reaction (5Z,8Z,11Z,14Z)-eicosatetraenoate + O2 = 5-hydroperoxy-(6E,8Z,11Z,14Z)-eicosatetraenoate. It carries out the reaction (5S,6R)-dihydroxy-(7E,9E,11Z,14Z)-eicosatetraenoate + O2 = (5S,6R)-dihydroxy-(15S)-hydroperoxy-(7E,9E,11Z,13E)-eicosatetraenoate. The catalysed reaction is (5S)-hydroperoxy-(6E,8Z,11Z,14Z)-eicosatetraenoate + O2 = (5S,15S)-dihydroperoxy-(6E,8Z,11Z,13E)-eicosatetraenoate. The enzyme catalyses 2-(5Z,8Z,11Z,14Z-eicosatetraenoyl)-glycerol + O2 = 2-[15(S)-hydroperoxy-(5Z,8Z,11Z,13E)-eicosatetraenoyl]-glycerol. It catalyses the reaction (8S)-hydroperoxy-(5Z,9E,11Z,14Z)-eicosatetraenoate + O2 = (8S,15S)-dihydroperoxy-(5Z,9E,11Z,13E)-eicosatetraenoate. It carries out the reaction N-(5Z,8Z,11Z,14Z)-eicosatetraenoyl-L-alanine + O2 = N-(15S)-hydroperoxy-(5Z,8Z,11Z,13E)-eicosatetraenoyl-alanine. The catalysed reaction is N-(5Z,8Z,11Z,14Z)-eicosatetraenoyl-gamma-aminobutanoate + O2 = N-(15S)-hydroperoxy-(5Z,8Z,11Z,13E)-eicosatetraenoyl-gamma-aminobutanoate. The enzyme catalyses N-(5Z,8Z,11Z,14Z)-eicosatetraenoyl-glycine + O2 = N-(15S)-hydroperoxy-(5Z,8Z,11Z,13E)-eicosatetraenoyl-glycine. It catalyses the reaction N-(5Z,8Z,11Z,14Z)-eicosatetraenoyl-taurine + O2 = N-(15S)-hydroperoxy-(5Z,8Z,11Z,13E)-eicosatetraenoyl-taurine. It carries out the reaction 2-(5Z,8Z,11Z,14Z-eicosatetraenoyl)-glycerol + O2 = 2-[12-hydroperoxy-(5Z,8Z,10E,14Z)-eicosatetraenoyl]-glycerol. The catalysed reaction is 1-octadecanoyl-2-(5Z,8Z,11Z,14Z-eicosatetraenoyl)-sn-glycero-3-phosphocholine + O2 = 1-octadecanoyl-2-(15-hydroperoxy-5Z,8Z,11Z,13E-eicosatetraenoyl)-sn-glycero-3-phosphocholine. The enzyme catalyses a 1-acyl-2-(5Z,8Z,11Z,14Z-eicosatetraenoyl)-sn-glycero-3-phospho-(1D-myo-inositol) + O2 = a 1-acyl-2-(15-hydroperoxy-5Z,8Z,11Z,13E-eicosatetraenoyl)-sn-glycero-3-phospho-(1D-myo-inositol). It catalyses the reaction a 1-acyl-2-(8Z,11Z,14Z-eicosatrienoyl)-sn-glycero-3-phospho-(1D-myo-inositol) + O2 = a 1-acyl-2-(15-hydroperoxy-8Z,11Z,13E-eicosatrienoyl)-sn-glycero-3-phospho-(1D-myo-inositol). It carries out the reaction 1-octadecanoyl-2-(5Z,8Z,11Z,14Z)-eicosatetraenoyl-sn-glycero-3-phosphoethanolamine + O2 = 1-octadecanoyl-2-(15-hydroperoxy-5Z,8Z,11Z,13E-eicosatetraenoyl)-sn-glycero-3-phosphoethanolamine. The catalysed reaction is 1-octadecanoyl-2-(5Z,8Z,11Z,14Z-eicosatetraenoyl)-sn-glycero-3-phospho-(1D-myo-inositol) + O2 = 1-octadecanoyl-2-(15-hydroperoxy-5Z,8Z,11Z,13E-eicosatetraenoyl)-sn-glycero-3-phospho-(1D-myo-inositol). The enzyme catalyses (8Z,11Z,14Z)-eicosatrienoate + O2 = 15-hydroperoxy-(8Z,11Z,13E)-eicosatrienoate. It catalyses the reaction (7S)-hydroperoxy-(4Z,8E,10Z,13Z,16Z,19Z)-docosahexaenoate + O2 = (7S,17S)-dihydroperoxy-(4Z,8E,10Z,13Z,15E,19Z)-docosahexaenoate. It carries out the reaction (5Z,8Z,11Z,14Z)-eicosatetraenoate + O2 = 15-hydroperoxy-(5Z,8Z,11Z,13E)-eicosatetraenoate. Its pathway is lipid metabolism; hydroperoxy eicosatetraenoic acid biosynthesis. Non-heme iron-containing dioxygenase that catalyzes the stereo-specific peroxidation of free and esterified polyunsaturated fatty acids (PUFAs) generating a spectrum of bioactive lipid mediators. It inserts peroxyl groups at C15 of arachidonate ((5Z,8Z,11Z,14Z)-eicosatetraenoate) producing (15S)-hydroperoxyeicosatetraenoate/(15S)-HPETE. Also peroxidizes linoleate ((9Z,12Z)-octadecadienoate) to 13-hydroperoxyoctadecadienoate/13-HPODE. Oxygenates arachidonyl derivatives such as 2-arachidonoylglycerol (2-AG) leading to the production and extracellular release of 15-hydroxyeicosatetraenoyl glycerol (15-HETE-G) that acts as a peroxisome proliferator-activated receptor alpha agonist. Has the ability to efficiently class-switch ALOX5 pro-inflammatory mediators into anti-inflammatory intermediates. Participates in the sequential oxidations of DHA ((4Z,7Z,10Z,13Z,16Z,19Z)-docosahexaenoate) to generate specialized pro-resolving mediators (SPMs) resolvin D5 ((7S,17S)-diHPDHA), which can actively down-regulate the immune response and have anti-aggregation properties with platelets. In addition to free PUFAs hydrolyzed from phospholipids, it directly oxidizes PUFAs esterified to membrane-bound phospholipids. Has no detectable 8S-lipoxygenase activity on arachidonate but reacts with (8S)-HPETE to produce (8S,15S)-diHPETE. May regulate progression through the cell cycle and cell proliferation. May also regulate cytokine secretion by macrophages and therefore play a role in the immune response. May also regulate macrophage differentiation into proatherogenic foam cells. Functionally, does not convert arachidonic acid to 15S-hydroperoxyeicosatetraenoic acid/(15S)-HPETE. This Homo sapiens (Human) protein is Polyunsaturated fatty acid lipoxygenase ALOX15B.